Reading from the N-terminus, the 225-residue chain is CRISPR pre-crRNA endoribonuclease Cas5d (225 aa).

Belongs to the CRISPR-associated protein Cas5 family. Subtype I-C/Dvulg subfamily. Does not require a metal cofactor. is required as a cofactor.

CRISPR (clustered regularly interspaced short palindromic repeat) is an adaptive immune system that provides protection against mobile genetic elements (viruses, transposable elements and conjugative plasmids). CRISPR clusters contain spacers, sequences complementary to antecedent mobile elements, and target invading nucleic acids. CRISPR clusters are transcribed and processed into CRISPR RNA (crRNA). This protein is a sequence-specific endonuclease that cleaves pre-crRNA at G21 into mature crRNA. Does not cleave pre-crRNA associated with the T.thermophilus strain HB27 Cas5 protein (AC Q746C2) CRISPR locus. The reaction mechanism may proceed by an intramolecular attack of the 2'-hydroxyl group of G21 on the scissile phosphodiester, cutting the precursor 3' to G21 residue yielding 5'-hydroxyl and 2' and/or 3' ends lacking a hydroxyl group (perhaps a 2'/3' cyclic phosphodiester). The protein is CRISPR pre-crRNA endoribonuclease Cas5d of Mannheimia succiniciproducens (strain KCTC 0769BP / MBEL55E).